The sequence spans 490 residues: Bifunctional protein HldE (490 aa).

The ribokinase stretch occupies residues 1–330 (MDRTNIENFL…EAMAHHALEY (330 aa)). 205–208 (NRKE) contacts ATP. Residue Asp275 is part of the active site. A cytidylyltransferase region spans residues 356 to 490 (FTNGCFDLLH…ERILDRYEQG (135 aa)).

In the N-terminal section; belongs to the carbohydrate kinase PfkB family. It in the C-terminal section; belongs to the cytidylyltransferase family. In terms of assembly, homodimer.

It catalyses the reaction D-glycero-beta-D-manno-heptose 7-phosphate + ATP = D-glycero-beta-D-manno-heptose 1,7-bisphosphate + ADP + H(+). The enzyme catalyses D-glycero-beta-D-manno-heptose 1-phosphate + ATP + H(+) = ADP-D-glycero-beta-D-manno-heptose + diphosphate. It functions in the pathway nucleotide-sugar biosynthesis; ADP-L-glycero-beta-D-manno-heptose biosynthesis; ADP-L-glycero-beta-D-manno-heptose from D-glycero-beta-D-manno-heptose 7-phosphate: step 1/4. Its pathway is nucleotide-sugar biosynthesis; ADP-L-glycero-beta-D-manno-heptose biosynthesis; ADP-L-glycero-beta-D-manno-heptose from D-glycero-beta-D-manno-heptose 7-phosphate: step 3/4. Functionally, catalyzes the phosphorylation of D-glycero-D-manno-heptose 7-phosphate at the C-1 position to selectively form D-glycero-beta-D-manno-heptose-1,7-bisphosphate. In terms of biological role, catalyzes the ADP transfer from ATP to D-glycero-beta-D-manno-heptose 1-phosphate, yielding ADP-D-glycero-beta-D-manno-heptose. This chain is Bifunctional protein HldE, found in Syntrophotalea carbinolica (strain DSM 2380 / NBRC 103641 / GraBd1) (Pelobacter carbinolicus).